The sequence spans 483 residues: Glycogen synthase (483 aa).

K18 contacts ADP-alpha-D-glucose.

Belongs to the glycosyltransferase 1 family. Bacterial/plant glycogen synthase subfamily.

It catalyses the reaction [(1-&gt;4)-alpha-D-glucosyl](n) + ADP-alpha-D-glucose = [(1-&gt;4)-alpha-D-glucosyl](n+1) + ADP + H(+). It functions in the pathway glycan biosynthesis; glycogen biosynthesis. In terms of biological role, synthesizes alpha-1,4-glucan chains using ADP-glucose. This Methylocella silvestris (strain DSM 15510 / CIP 108128 / LMG 27833 / NCIMB 13906 / BL2) protein is Glycogen synthase.